Here is a 631-residue protein sequence, read N- to C-terminus: tRNA uridine 5-carboxymethylaminomethyl modification enzyme MnmG (631 aa).

Residue 15–20 coordinates FAD; that stretch reads GAGHAG. The tract at residues 203 to 232 is disordered; sequence TPPRVDGNTVDYSKTQEEPGDKEPRHFSYT. The segment covering 216-232 has biased composition (basic and acidic residues); it reads KTQEEPGDKEPRHFSYT. 276 to 290 serves as a coordination point for NAD(+); that stretch reads GPRYCPSIEDKVVRF.

This sequence belongs to the MnmG family. As to quaternary structure, homodimer. Heterotetramer of two MnmE and two MnmG subunits. FAD is required as a cofactor.

The protein resides in the cytoplasm. In terms of biological role, NAD-binding protein involved in the addition of a carboxymethylaminomethyl (cmnm) group at the wobble position (U34) of certain tRNAs, forming tRNA-cmnm(5)s(2)U34. This is tRNA uridine 5-carboxymethylaminomethyl modification enzyme MnmG from Lactobacillus gasseri (strain ATCC 33323 / DSM 20243 / BCRC 14619 / CIP 102991 / JCM 1131 / KCTC 3163 / NCIMB 11718 / NCTC 13722 / AM63).